The following is a 527-amino-acid chain: Peptide chain release factor 3 (527 aa).

The 268-residue stretch at Ala11 to Leu278 folds into the tr-type G domain. GTP is bound by residues Ser20–Thr27, Asp87–His91, and Asn141–Asp144.

This sequence belongs to the TRAFAC class translation factor GTPase superfamily. Classic translation factor GTPase family. PrfC subfamily.

Its subcellular location is the cytoplasm. Increases the formation of ribosomal termination complexes and stimulates activities of RF-1 and RF-2. It binds guanine nucleotides and has strong preference for UGA stop codons. It may interact directly with the ribosome. The stimulation of RF-1 and RF-2 is significantly reduced by GTP and GDP, but not by GMP. The sequence is that of Peptide chain release factor 3 from Saccharophagus degradans (strain 2-40 / ATCC 43961 / DSM 17024).